We begin with the raw amino-acid sequence, 428 residues long: 3-phosphoshikimate 1-carboxyvinyltransferase (428 aa).

3 residues coordinate 3-phosphoshikimate: lysine 22, serine 23, and arginine 27. Lysine 22 is a phosphoenolpyruvate binding site. 2 residues coordinate phosphoenolpyruvate: glycine 96 and arginine 124. Residues serine 169, serine 170, glutamine 171, serine 197, aspartate 313, asparagine 336, and lysine 340 each contribute to the 3-phosphoshikimate site. Glutamine 171 contributes to the phosphoenolpyruvate binding site. The Proton acceptor role is filled by aspartate 313. The phosphoenolpyruvate site is built by arginine 344, arginine 386, and lysine 411.

It belongs to the EPSP synthase family. Monomer.

It localises to the cytoplasm. It catalyses the reaction 3-phosphoshikimate + phosphoenolpyruvate = 5-O-(1-carboxyvinyl)-3-phosphoshikimate + phosphate. It participates in metabolic intermediate biosynthesis; chorismate biosynthesis; chorismate from D-erythrose 4-phosphate and phosphoenolpyruvate: step 6/7. Catalyzes the transfer of the enolpyruvyl moiety of phosphoenolpyruvate (PEP) to the 5-hydroxyl of shikimate-3-phosphate (S3P) to produce enolpyruvyl shikimate-3-phosphate and inorganic phosphate. The protein is 3-phosphoshikimate 1-carboxyvinyltransferase of Photorhabdus laumondii subsp. laumondii (strain DSM 15139 / CIP 105565 / TT01) (Photorhabdus luminescens subsp. laumondii).